Reading from the N-terminus, the 505-residue chain is Salutaridine synthase (505 aa).

Residues 10–30 traverse the membrane as a helical segment; that stretch reads DFWMIACTVIIVFALVKFMFS. Cysteine 444 serves as a coordination point for heme.

Belongs to the cytochrome P450 family. Requires heme as cofactor.

The protein localises to the endoplasmic reticulum membrane. It carries out the reaction (R)-reticuline + reduced [NADPH--hemoprotein reductase] + O2 = salutaridine + oxidized [NADPH--hemoprotein reductase] + 2 H2O + H(+). Its function is as follows. Cytochrome P450 monooxygenase involved in biosynthesis of morphinan-type benzylisoquinoline and opiate alkaloids natural products. Catalyzes the formation of the morphinan alkaloid salutaridine by intramolecular phenol oxidation of (R)-reticuline without the incorporation of oxygen into the product. Can also use (R)-norreticuline as substrate. This is Salutaridine synthase from Papaver somniferum (Opium poppy).